The chain runs to 570 residues: Urease subunit alpha (570 aa).

Positions 131–570 (GGFDSHIHFI…LPMAQRYFMY (440 aa)) constitute a Urease domain. 3 residues coordinate Ni(2+): His-136, His-138, and Lys-219. An N6-carboxylysine modification is found at Lys-219. His-221 contacts substrate. Residues His-248 and His-274 each contribute to the Ni(2+) site. His-322 (proton donor) is an active-site residue. Residue Asp-362 participates in Ni(2+) binding.

It belongs to the metallo-dependent hydrolases superfamily. Urease alpha subunit family. As to quaternary structure, heterotrimer of UreA (gamma), UreB (beta) and UreC (alpha) subunits. Three heterotrimers associate to form the active enzyme. Ni cation serves as cofactor. Carboxylation allows a single lysine to coordinate two nickel ions.

Its subcellular location is the cytoplasm. It carries out the reaction urea + 2 H2O + H(+) = hydrogencarbonate + 2 NH4(+). Its pathway is nitrogen metabolism; urea degradation; CO(2) and NH(3) from urea (urease route): step 1/1. In Rhodopseudomonas palustris (strain HaA2), this protein is Urease subunit alpha.